The chain runs to 498 residues: MSEMRTHFPDRPQFSGFMKPCRVEGDISQLEVYGEIPKEIDGVFYRVMPDPQLPPFIENDPWFNGDGNVTAFRIQDGRASFRQRYVRTEKFMRERKAQRALLGKYRNKFTDAVEFRVRSTANTNVVFFNGQLLALKEDSPPYAMDPITLETKGLYDFEGQLPALTFTAHPKFDPVTGEMVCFGYEARGDGTPDVCYYRVSPTGQFKEVVWLVAPVVAMIHDFAVTDNWVVFPIIPQVCDIERMKQGGEHWQWSPETPLYLGVIPRRGAKGEDVKWFQYKNSFPGHTANAYEDKEGHLVIDLGLSEKNVFFWWPDAQGNAPEPSSIHSQLVRFTLNPHAEDLALPEPKILHQGNSEFYRIDDRFATHSYRHCYFDLMDPQLGTDFERIRPNLGGGYPLYNSLAHFDNATGQTEVYFPGNTHLVQEPVFIPRKDSTTEGDGWVLALVNNYATMASELHLLDTRDFTHAQAKILLPIRLRHGLHGSWVDGRDIGSQTEQLQ.

Positions 105 and 136 each coordinate piceatannol. Positions 105 and 136 each coordinate trans-resveratrol. Fe cation contacts are provided by histidine 169, histidine 220, and histidine 285. Glutamate 355 lines the piceatannol pocket. Glutamate 355 contributes to the trans-resveratrol binding site. A Fe cation-binding site is contributed by histidine 481.

It belongs to the carotenoid oxygenase family. It depends on Fe(2+) as a cofactor.

The enzyme catalyses trans-resveratrol + O2 = 3,5-dihydroxybenzaldehyde + 4-hydroxybenzaldehyde. The catalysed reaction is piceatannol + O2 = 3,5-dihydroxybenzaldehyde + 3,4-dihydroxybenzaldehyde. In terms of biological role, dioxygenase that cleaves the interphenyl C-alpha-C-beta double bond of resveratrol to yield 3,5-dihydroxybenzaldehyde and 4-hydroxybenzaldehyde. Also cleaves piceatannol, a compound that differs from resveratrol only in the occurrence of an additional hydroxyl group, which leads to the production of 3,4-dihydroxybenzaldehyde and 3,5-hydroxybenzaldehyde. The protein is Resveratrol cleavage oxygenase 1 of Aspergillus fumigatus (strain ATCC MYA-4609 / CBS 101355 / FGSC A1100 / Af293) (Neosartorya fumigata).